The primary structure comprises 255 residues: 5-oxoprolinase subunit A 1 (255 aa).

It belongs to the LamB/PxpA family. Forms a complex composed of PxpA, PxpB and PxpC.

The catalysed reaction is 5-oxo-L-proline + ATP + 2 H2O = L-glutamate + ADP + phosphate + H(+). In terms of biological role, catalyzes the cleavage of 5-oxoproline to form L-glutamate coupled to the hydrolysis of ATP to ADP and inorganic phosphate. This chain is 5-oxoprolinase subunit A 1, found in Agrobacterium fabrum (strain C58 / ATCC 33970) (Agrobacterium tumefaciens (strain C58)).